The chain runs to 440 residues: DNA polymerase delta small subunit (440 aa).

The protein belongs to the DNA polymerase delta/II small subunit family. As to quaternary structure, heterodimer with subunits of 125 kDa and 50 kDa.

Its subcellular location is the nucleus. The catalysed reaction is DNA(n) + a 2'-deoxyribonucleoside 5'-triphosphate = DNA(n+1) + diphosphate. The function of the small subunit is not yet clear. In Arabidopsis thaliana (Mouse-ear cress), this protein is DNA polymerase delta small subunit (POLD2).